We begin with the raw amino-acid sequence, 2845 residues long: Multiple epidermal growth factor-like domains protein 8 (2845 aa).

A signal peptide spans 1–27; it reads MALGKVLAMALVLALAVLGSLSPGARA. At 28 to 2647 the chain is on the extracellular side; it reads GDCKGQRQVL…FFRQDQAHID (2620 aa). 6 cysteine pairs are disulfide-bonded: cysteine 30-cysteine 57, cysteine 142-cysteine 152, cysteine 146-cysteine 158, cysteine 174-cysteine 184, cysteine 178-cysteine 191, and cysteine 193-cysteine 202. Residues 30 to 140 form the CUB 1 domain; sequence CKGQRQVLRE…LGFNASFRFS (111 aa). Asparagine 50 is a glycosylation site (N-linked (GlcNAc...) asparagine). EGF-like domains lie at 138-168 and 170-203; these read RFSL…GGPD and GLQE…RACD. Residue asparagine 217 is glycosylated (N-linked (GlcNAc...) asparagine). Kelch repeat units lie at residues 241–287, 290–338, 346–399, 402–453, 459–511, and 525–575; these read LLAV…AVAW, SLVL…AGHA, WLYV…FHAP, ALLV…FHTA, YMVV…APPS, and VLLV…SRDP. 3 PSI domains span residues 561-613, 847-899, and 900-947; these read YCSM…GDCQ, SCTS…TLCP, and LCEE…EECP. Asparagine 1048 is a glycosylation site (N-linked (GlcNAc...) asparagine). An EGF-like 3; calcium-binding domain is found at 1074–1115; that stretch reads DVDECRLGLARCHPRATCLNTPLSYECHCQRGYQGDGISHCN. Cystine bridges form between cysteine 1078/cysteine 1091, cysteine 1085/cysteine 1100, cysteine 1102/cysteine 1114, cysteine 1163/cysteine 1171, cysteine 1165/cysteine 1179, cysteine 1182/cysteine 1191, cysteine 1194/cysteine 1208, cysteine 1211/cysteine 1224, cysteine 1213/cysteine 1231, cysteine 1233/cysteine 1242, cysteine 1245/cysteine 1259, cysteine 1263/cysteine 1302, cysteine 1336/cysteine 1367, cysteine 1407/cysteine 1421, cysteine 1415/cysteine 1433, and cysteine 1435/cysteine 1444. Laminin EGF-like domains lie at 1163–1210 and 1211–1261; these read CGCS…GCRP and CQCN…SCFR. The region spanning 1263–1405 is the CUB 2 domain; sequence CGGRALLTNV…WGFNASVGSA (143 aa). N-linked (GlcNAc...) asparagine glycosylation occurs at asparagine 1271. A Phosphothreonine modification is found at threonine 1353. The region spanning 1403-1445 is the EGF-like 4 domain; that stretch reads GSARCGSGGPGSCPVPQECVPQDGAAGAGLCRCPQGWAGPHCR. 6 Kelch repeats span residues 1522–1570, 1580–1626, 1632–1679, 1685–1735, 1796–1843, and 1852–1898; these read TLWM…SFHA, AMYL…HTLT, SLLL…SAVY, SLYV…VRGS, TMVV…ESVA, and RLYI…CHGA. Residues 1726 to 1745 form a disordered region; that stretch reads RDRMRNVRGSSRGLGQVPGE. PSI domains follow at residues 1876-1916, 1924-1979, 2060-2118, and 2120-2177; these read PCRL…SPCS, ECRR…NDCR, PCHL…ESCS, and GCAQ…LSCP. Residue asparagine 2066 is glycosylated (N-linked (GlcNAc...) asparagine). In terms of domain architecture, EGF-like 5 spans 2178 to 2216; the sequence is PEDECANGHHDCNETQNCHDQPHGYECSCKTGYTMDNMT. Cystine bridges form between cysteine 2182/cysteine 2195 and cysteine 2189/cysteine 2204. Asparagine 2229 carries an N-linked (GlcNAc...) asparagine glycan. 8 cysteine pairs are disulfide-bonded: cysteine 2253–cysteine 2261, cysteine 2255–cysteine 2270, cysteine 2273–cysteine 2282, cysteine 2285–cysteine 2299, cysteine 2380–cysteine 2389, cysteine 2382–cysteine 2397, cysteine 2399–cysteine 2424, and cysteine 2427–cysteine 2441. Laminin EGF-like domains lie at 2253-2301 and 2380-2443; these read CRCN…TCRP and CQCN…QCYR. The disordered stretch occupies residues 2523 to 2564; sequence TVHIQPPPAPPPPPPPADGGPRGAGDPGGAGASSGPGAPAEP. Over residues 2527 to 2540 the composition is skewed to pro residues; sequence QPPPAPPPPPPPAD. Positions 2542–2556 are enriched in gly residues; it reads GPRGAGDPGGAGASS. A helical transmembrane segment spans residues 2648-2668; it reads LFVFFSVFFSCFFLFLSLCVL. The Cytoplasmic portion of the chain corresponds to 2669 to 2845; sequence LWKAKQALDQ…SQDNLTSMSL (177 aa). Gly residues predominate over residues 2817–2831; the sequence is GGGAGGSGHGTGAGR. Residues 2817-2845 form a disordered region; that stretch reads GGGAGGSGHGTGAGRKGLLSQDNLTSMSL. Polar residues predominate over residues 2836–2845; sequence SQDNLTSMSL.

The protein resides in the membrane. Acts as a negative regulator of hedgehog signaling. This Homo sapiens (Human) protein is Multiple epidermal growth factor-like domains protein 8 (MEGF8).